The following is a 457-amino-acid chain: Argininosuccinate lyase (457 aa).

This sequence belongs to the lyase 1 family. Argininosuccinate lyase subfamily.

Its subcellular location is the cytoplasm. It catalyses the reaction 2-(N(omega)-L-arginino)succinate = fumarate + L-arginine. Its pathway is amino-acid biosynthesis; L-arginine biosynthesis; L-arginine from L-ornithine and carbamoyl phosphate: step 3/3. The chain is Argininosuccinate lyase from Shigella dysenteriae serotype 1 (strain Sd197).